A 376-amino-acid polypeptide reads, in one-letter code: Anhydro-N-acetylmuramic acid kinase (376 aa).

Residue 22–29 (GTSMDGAD) coordinates ATP.

The protein belongs to the anhydro-N-acetylmuramic acid kinase family.

It catalyses the reaction 1,6-anhydro-N-acetyl-beta-muramate + ATP + H2O = N-acetyl-D-muramate 6-phosphate + ADP + H(+). The protein operates within amino-sugar metabolism; 1,6-anhydro-N-acetylmuramate degradation. Its pathway is cell wall biogenesis; peptidoglycan recycling. Its function is as follows. Catalyzes the specific phosphorylation of 1,6-anhydro-N-acetylmuramic acid (anhMurNAc) with the simultaneous cleavage of the 1,6-anhydro ring, generating MurNAc-6-P. Is required for the utilization of anhMurNAc either imported from the medium or derived from its own cell wall murein, and thus plays a role in cell wall recycling. The polypeptide is Anhydro-N-acetylmuramic acid kinase (Neisseria gonorrhoeae (strain NCCP11945)).